Reading from the N-terminus, the 172-residue chain is Protein-export protein SecB (172 aa).

This sequence belongs to the SecB family. As to quaternary structure, homotetramer, a dimer of dimers. One homotetramer interacts with 1 SecA dimer.

It is found in the cytoplasm. Its function is as follows. One of the proteins required for the normal export of preproteins out of the cell cytoplasm. It is a molecular chaperone that binds to a subset of precursor proteins, maintaining them in a translocation-competent state. It also specifically binds to its receptor SecA. This chain is Protein-export protein SecB, found in Ralstonia pickettii (strain 12J).